A 388-amino-acid polypeptide reads, in one-letter code: 3-amino-5-hydroxybenzoate synthase (388 aa).

Residue Lys-188 is modified to N6-(pyridoxal phosphate)lysine.

This sequence belongs to the degT/dnrJ/eryC1 family. In terms of assembly, homodimer. Can interact with RifL. Pyridoxal 5'-phosphate serves as cofactor.

The catalysed reaction is 5-deoxy-5-amino-3-dehydroshikimate = 3-amino-5-hydroxybenzoate + H2O + H(+). It carries out the reaction UDP-3-oxo-alpha-D-glucose + L-glutamine = UDP-alpha-D-kanosamine + 2-oxoglutaramate. Its pathway is antibiotic biosynthesis; rifamycin B biosynthesis. With respect to regulation, AHBA synthase activity is activated by 3-deoxy-D-arabinoheptulosonic acid 7-phosphate (DAHP), an intermediate in the shikimate pathway, and is irreversibly inhibited by gabaculine (5-amino-1,3-cyclohexadiene-1-carboxylate). Catalyzes the dehydration and aromatization of 5-amino-5-deoxy-3-dehydroshikimate (aminoDHS) to 3-amino-5-hydroxybenzoate (AHBA), a compound that then serves as the starter unit for the assembly of a polyketide during the biosynthesis of rifamycin B and other ansamycin antibiotics. Cannot utilize 5-deoxy-5-amino-3-dehydroquinate (aminoDHQ), 5-deoxy-5-aminoshikimate (aminoSA), quinate, 3-dehydroquinate, or 3-dehydroshikimate (DHS) as substrate. In terms of biological role, in a complex with RifL, RifK may have a second function in the AHBA pathway, acting as a transaminase introducing the nitrogen into the first pathway intermediate, UDP-3-keto-D-glucose, to give UDP-kanosamine. Appears to use glutamine as the nitrogen donor; NH(4)(+) or asparagine are 30% less effective as nitrogen donors and neither glutamate nor aspartate show activity. The sequence is that of 3-amino-5-hydroxybenzoate synthase (rifK) from Amycolatopsis mediterranei (strain S699) (Nocardia mediterranei).